A 279-amino-acid polypeptide reads, in one-letter code: Vomeronasal type-1 receptor A8 (279 aa).

The Extracellular portion of the chain corresponds to 1–19; the sequence is MNKDHTLYCSVYIRNAFFS. A helical transmembrane segment spans residues 20 to 40; that stretch reads EIGIGISANSCLLLFHTFMFI. Residues 41-49 are Cytoplasmic-facing; sequence RGHRPRLTD. Residues 50–70 form a helical membrane-spanning segment; that stretch reads LPIGFVALIHLVMLLLAAYIT. Topologically, residues 71 to 93 are extracellular; the sequence is EDFFMSSGGWDDITCKLVIFLHR. C85 and C172 are joined by a disulfide. Residues 94–114 form a helical membrane-spanning segment; sequence FFRSLSVCATCLLSVFQAIIL. Over 115 to 134 the chain is Cytoplasmic; it reads CPQSSHLAKLKQNSPHQLSY. A helical membrane pass occupies residues 135–155; sequence FFIFLSIFYTSISSQILIAAI. The Extracellular segment spans residues 156–159; that stretch reads PTQN. The N-linked (GlcNAc...) asparagine glycan is linked to N159. A helical transmembrane segment spans residues 160–180; it reads ITFVNLIYITNSCSFLPLSSS. Topologically, residues 181–187 are cytoplasmic; it reads MQHTFST. Residues 188 to 208 traverse the membrane as a helical segment; that stretch reads LLTFRNVFVIGLMGLSTCYMA. The Extracellular portion of the chain corresponds to 209-238; it reads TLLCRHKTRSQRLQNSKLSPKATPEQRALR. Residues 239–259 form a helical membrane-spanning segment; the sequence is TILMLMSFFLLMSTFDSIISY. Residues 260 to 279 are Cytoplasmic-facing; the sequence is SRTIITGKSTALLCPDSCRS.

Belongs to the G-protein coupled receptor 1 family. Expressed in a subset of sensory neurons located in the apical layer of the vomeronasal organ.

The protein resides in the cell membrane. In terms of biological role, putative pheromone receptor implicated in the regulation of social and reproductive behavior. The protein is Vomeronasal type-1 receptor A8 of Mus musculus (Mouse).